A 233-amino-acid chain; its full sequence is Protein DOUBLE-STRAND BREAK FORMATION (233 aa).

In terms of assembly, interacts with PRD1; this interaction facilitates a binding to PRD3. In terms of tissue distribution, specifically expressed in buds.

In terms of biological role, required for meiotic double-strand break (DSB) formation, the initial event for meiotic recombination. This Arabidopsis thaliana (Mouse-ear cress) protein is Protein DOUBLE-STRAND BREAK FORMATION.